A 322-amino-acid chain; its full sequence is MNLGFRVTGKFVRELLDVLDEIAEEIRQEEKEKYPYTEWERKREVVKERLRKLPEYVREAISVITVQKRVGRPKKVDLEKRVMLFLFARLMDKSNRDIEELLELFEPLFGIKVSYKTIERLYSDEEVRMALHNLFILLLREEGVSGDFSGDGTGYSLTITKHYRSNPKRKGKDFRYVFRIIDIDTGMYVGFGYSDRSEKDAFEKALGMLKSMGVKVNSISLDKYYSSRKTLRLFDAETAVYVIPKRNLARIGFDWLRVIERIVEAPYRFLKRYFKRNLSEAGFSADKRRFGWLIRQRREDRREMALFAVGLWHNVFAVRVVR.

The protein belongs to the transposase 11 family.

Involved in the transposition of the insertion sequence ISA1214. The polypeptide is Probable transposase for insertion sequence element ISA1214 (Archaeoglobus fulgidus (strain ATCC 49558 / DSM 4304 / JCM 9628 / NBRC 100126 / VC-16)).